The sequence spans 305 residues: Sodium/potassium-transporting ATPase subunit beta-1 (305 aa).

Topologically, residues 1–32 (MAREKSTDDGGGWKKFLWDSEKKQVLGRTGTS) are cytoplasmic. Residues 33-53 (WFKIFVFYLIFYGCLAGIFIG) form a helical; Signal-anchor for type II membrane protein membrane-spanning segment. Over 54-305 (TIQVMLLTIS…RFEVKIEVKS (252 aa)) the chain is Extracellular. A glycan (N-linked (GlcNAc...) asparagine) is linked at asparagine 114. Cysteine 127 and cysteine 150 are joined by a disulfide. An N-linked (GlcNAc...) asparagine glycan is attached at asparagine 159. An intrachain disulfide couples cysteine 160 to cysteine 176. Asparagine 194 and asparagine 267 each carry an N-linked (GlcNAc...) asparagine glycan. Cysteines 215 and 278 form a disulfide.

Belongs to the X(+)/potassium ATPases subunit beta family. In terms of assembly, the sodium/potassium-transporting ATPase is composed of a catalytic alpha subunit, an auxiliary non-catalytic beta subunit and an additional regulatory subunit.

The protein localises to the cell membrane. This is the non-catalytic component of the active enzyme, which catalyzes the hydrolysis of ATP coupled with the exchange of Na(+) and K(+) ions across the plasma membrane. The beta subunit regulates, through assembly of alpha/beta heterodimers, the number of sodium pumps transported to the plasma membrane. This chain is Sodium/potassium-transporting ATPase subunit beta-1 (atp1b1), found in Tetronarce californica (Pacific electric ray).